The primary structure comprises 213 residues: Pyrrolidone-carboxylate peptidase (213 aa).

Active-site residues include glutamate 80, cysteine 143, and histidine 166.

It belongs to the peptidase C15 family. As to quaternary structure, homotetramer.

The protein localises to the cytoplasm. The catalysed reaction is Release of an N-terminal pyroglutamyl group from a polypeptide, the second amino acid generally not being Pro.. Functionally, removes 5-oxoproline from various penultimate amino acid residues except L-proline. The chain is Pyrrolidone-carboxylate peptidase from Clavibacter michiganensis subsp. michiganensis (strain NCPPB 382).